Here is a 135-residue protein sequence, read N- to C-terminus: Holo-[acyl-carrier-protein] synthase (135 aa).

Residues aspartate 7 and glutamate 57 each contribute to the Mg(2+) site.

This sequence belongs to the P-Pant transferase superfamily. AcpS family. The cofactor is Mg(2+).

Its subcellular location is the cytoplasm. The enzyme catalyses apo-[ACP] + CoA = holo-[ACP] + adenosine 3',5'-bisphosphate + H(+). Transfers the 4'-phosphopantetheine moiety from coenzyme A to a Ser of acyl-carrier-protein. This is Holo-[acyl-carrier-protein] synthase from Corynebacterium glutamicum (strain R).